A 215-amino-acid polypeptide reads, in one-letter code: uncharacterized protein (215 aa).

Disordered regions lie at residues 1-144 (MPKG…PYLR) and 156-215 (IQGH…GAPA). Low complexity-rich tracts occupy residues 16–29 (ASTPSRSSWPASPT), 49–58 (SSSWPKSPIK), 85–96 (SGSSSPGPSSSR), and 104–127 (STAASSRSPATSARSTSSCPRAAP).

This is an uncharacterized protein from Homo sapiens (Human).